The chain runs to 222 residues: Glutathione S-transferase A4 (222 aa).

Position 1 is an N-acetylmethionine (Met-1). Residues 3–83 (ARPKLHYPNG…YIADKHNLFG (81 aa)) enclose the GST N-terminal domain. Glutathione contacts are provided by residues Tyr-9, 54–55 (QV), and 67–68 (QT). Positions 85–208 (NLKERTLIDM…EPGSKKKPPP (124 aa)) constitute a GST C-terminal domain. Tyr-212 lines the substrate pocket.

Belongs to the GST superfamily. Alpha family. In terms of assembly, homodimer. Expressed at a high level in brain, placenta, and skeletal muscle and much lower in lung and liver.

The protein localises to the cytoplasm. The catalysed reaction is RX + glutathione = an S-substituted glutathione + a halide anion + H(+). Conjugation of reduced glutathione to a wide number of exogenous and endogenous hydrophobic electrophiles. This isozyme has a high catalytic efficiency with 4-hydroxyalkenals such as 4-hydroxynonenal (4-HNE). The polypeptide is Glutathione S-transferase A4 (GSTA4) (Homo sapiens (Human)).